A 238-amino-acid chain; its full sequence is Pyridoxine 5'-phosphate synthase (238 aa).

Asn-9 serves as a coordination point for 3-amino-2-oxopropyl phosphate. Asp-11 to His-12 contacts 1-deoxy-D-xylulose 5-phosphate. Position 20 (Arg-20) interacts with 3-amino-2-oxopropyl phosphate. The active-site Proton acceptor is His-45. 2 residues coordinate 1-deoxy-D-xylulose 5-phosphate: Arg-47 and His-52. Glu-72 functions as the Proton acceptor in the catalytic mechanism. Thr-102 contacts 1-deoxy-D-xylulose 5-phosphate. His-189 (proton donor) is an active-site residue. 3-amino-2-oxopropyl phosphate-binding positions include Gly-190 and Gly-211–His-212.

It belongs to the PNP synthase family. In terms of assembly, homooctamer; tetramer of dimers.

It is found in the cytoplasm. The catalysed reaction is 3-amino-2-oxopropyl phosphate + 1-deoxy-D-xylulose 5-phosphate = pyridoxine 5'-phosphate + phosphate + 2 H2O + H(+). The protein operates within cofactor biosynthesis; pyridoxine 5'-phosphate biosynthesis; pyridoxine 5'-phosphate from D-erythrose 4-phosphate: step 5/5. Functionally, catalyzes the complicated ring closure reaction between the two acyclic compounds 1-deoxy-D-xylulose-5-phosphate (DXP) and 3-amino-2-oxopropyl phosphate (1-amino-acetone-3-phosphate or AAP) to form pyridoxine 5'-phosphate (PNP) and inorganic phosphate. This chain is Pyridoxine 5'-phosphate synthase, found in Ehrlichia canis (strain Jake).